The primary structure comprises 277 residues: Urease accessory protein UreD (277 aa).

Belongs to the UreD family. UreD, UreF and UreG form a complex that acts as a GTP-hydrolysis-dependent molecular chaperone, activating the urease apoprotein by helping to assemble the nickel containing metallocenter of UreC. The UreE protein probably delivers the nickel.

Its subcellular location is the cytoplasm. Its function is as follows. Required for maturation of urease via the functional incorporation of the urease nickel metallocenter. The protein is Urease accessory protein UreD of Flavobacterium johnsoniae (strain ATCC 17061 / DSM 2064 / JCM 8514 / BCRC 14874 / CCUG 350202 / NBRC 14942 / NCIMB 11054 / UW101) (Cytophaga johnsonae).